The sequence spans 102 residues: Carboxysome shell protein CsoS1C (102 aa).

Residues 8 to 93 enclose the BMC domain; sequence ALGMIETRGL…PHKEVEPVLA (86 aa).

Belongs to the bacterial microcompartments protein family. CsoS1 subfamily. Homohexamer with a small central pore.

It is found in the carboxysome. Its function is as follows. One of shell proteins of the carboxysome, a polyhedral inclusion where RuBisCO (ribulose bisphosphate carboxylase, ccbL-ccbS) is sequestered. Assembles into hexamers which make sheets that form the facets of the polyhedral carboxysome. The shell probably limits the diffusion of CO(2) into and out of the carboxysome. The polypeptide is Carboxysome shell protein CsoS1C (Hydrogenovibrio crunogenus (strain DSM 25203 / XCL-2) (Thiomicrospira crunogena)).